A 270-amino-acid chain; its full sequence is MSNRGRLGDAFLRPGSSSFLDFLSDHAPELLPGRSAAAGNAPLAPHATTIVALTFQDGVVMAGDRRATAGTMIASREIEKVFPADDYSVIGISGSAGIGVDLARLFQLELEHYEKIEGSLLSLDGKANRLGTLLRGNLPLAMQGFVVVPLFGGYDLDRGAGRIFSYDATGGRYEEHEHHGTGSGAIFARGALKKLWRPGMDAAEAVKVAVEALYDAADDDAATGGPDPVRRIWPVVTTVTAAGYRRVPEDELATLVDALLAVRTERGRLA.

Residues 1 to 47 constitute a propeptide, removed in mature form; by autocatalysis; it reads MSNRGRLGDAFLRPGSSSFLDFLSDHAPELLPGRSAAAGNAPLAPHA. The Nucleophile role is filled by Thr-48.

The protein belongs to the peptidase T1B family. In terms of assembly, the 20S proteasome core is composed of 14 alpha and 14 beta subunits that assemble into four stacked heptameric rings, resulting in a barrel-shaped structure. The two inner rings, each composed of seven catalytic beta subunits, are sandwiched by two outer rings, each composed of seven alpha subunits. The catalytic chamber with the active sites is on the inside of the barrel. Has a gated structure, the ends of the cylinder being occluded by the N-termini of the alpha-subunits. Is capped by the proteasome-associated ATPase, ARC.

The protein localises to the cytoplasm. The catalysed reaction is Cleavage of peptide bonds with very broad specificity.. The protein operates within protein degradation; proteasomal Pup-dependent pathway. The formation of the proteasomal ATPase ARC-20S proteasome complex, likely via the docking of the C-termini of ARC into the intersubunit pockets in the alpha-rings, may trigger opening of the gate for substrate entry. Interconversion between the open-gate and close-gate conformations leads to a dynamic regulation of the 20S proteasome proteolysis activity. Its function is as follows. Component of the proteasome core, a large protease complex with broad specificity involved in protein degradation. This is Proteasome subunit beta from Xylanimonas cellulosilytica (strain DSM 15894 / JCM 12276 / CECT 5975 / KCTC 9989 / LMG 20990 / NBRC 107835 / XIL07).